The following is a 545-amino-acid chain: T-complex protein 1 subunit alpha (545 aa).

Ser-2 bears the N-acetylserine mark.

This sequence belongs to the TCP-1 chaperonin family. Heterooligomeric complex of about 850 to 900 kDa that forms two stacked rings, 12 to 16 nm in diameter.

It localises to the cytoplasm. Its function is as follows. Molecular chaperone; assists the folding of proteins upon ATP hydrolysis. Known to play a role, in vitro, in the folding of actin and tubulin. The chain is T-complex protein 1 subunit alpha from Arabidopsis thaliana (Mouse-ear cress).